Reading from the N-terminus, the 150-residue chain is Large ribosomal subunit protein uL11 (150 aa).

The protein belongs to the universal ribosomal protein uL11 family. As to quaternary structure, part of the ribosomal stalk of the 50S ribosomal subunit. Interacts with L10 and the large rRNA to form the base of the stalk. L10 forms an elongated spine to which L12 dimers bind in a sequential fashion forming a multimeric L10(L12)X complex. Post-translationally, one or more lysine residues are methylated.

In terms of biological role, forms part of the ribosomal stalk which helps the ribosome interact with GTP-bound translation factors. This is Large ribosomal subunit protein uL11 from Jannaschia sp. (strain CCS1).